Consider the following 830-residue polypeptide: Protein translocase subunit SecA (830 aa).

Residues glutamine 86, 104–108 (GEGKT), and aspartate 491 each bind ATP. 4 residues coordinate Zn(2+): cysteine 813, cysteine 815, cysteine 824, and cysteine 825.

This sequence belongs to the SecA family. Monomer and homodimer. Part of the essential Sec protein translocation apparatus which comprises SecA, SecYEG and auxiliary proteins SecDF. Other proteins may also be involved. Zn(2+) serves as cofactor.

It localises to the cell membrane. The protein localises to the cytoplasm. The catalysed reaction is ATP + H2O + cellular proteinSide 1 = ADP + phosphate + cellular proteinSide 2.. In terms of biological role, part of the Sec protein translocase complex. Interacts with the SecYEG preprotein conducting channel. Has a central role in coupling the hydrolysis of ATP to the transfer of proteins into and across the cell membrane, serving as an ATP-driven molecular motor driving the stepwise translocation of polypeptide chains across the membrane. The sequence is that of Protein translocase subunit SecA from Syntrophomonas wolfei subsp. wolfei (strain DSM 2245B / Goettingen).